The chain runs to 166 residues: Myosin regulatory light chain 2, ventricular/cardiac muscle isoform (166 aa).

A N,N,N-trimethylalanine modification is found at Ala-2. A phosphoserine; by MLCK mark is found at Ser-14 and Ser-15. Position 19 is a phosphoserine (Ser-19). 3 consecutive EF-hand domains span residues 24 to 59 (TQIQ…LGRV), 94 to 129 (DPEE…QAER), and 130 to 165 (FSKE…GEEK). Positions 37, 39, 41, and 48 each coordinate Ca(2+). Thr-52 carries the phosphothreonine modification.

In terms of assembly, myosin is a hexamer of 2 heavy chains and 4 light chains. Interacts with MYOC. N-terminus is methylated by METTL11A/NTM1. In terms of processing, phosphorylated by MYLK3 and MYLK2; promotes cardiac muscle contraction and function. Dephosphorylated by PPP1CB complexed to PPP1R12B. The phosphorylated form in adult is expressed as gradients across the heart from endocardium (low phosphorylation) to epicardium (high phosphorylation); regulates cardiac torsion and workload distribution. In terms of tissue distribution, abundantly expressed in both cardiac and slow skeletal muscle. In the adult heart, the phosphorylated form is highly expressed in epicardium and weakly in endocardium.

The protein localises to the cytoplasm. It localises to the myofibril. It is found in the sarcomere. Its subcellular location is the a band. Its function is as follows. Contractile protein that plays a role in heart development and function. Following phosphorylation, plays a role in cross-bridge cycling kinetics and cardiac muscle contraction by increasing myosin lever arm stiffness and promoting myosin head diffusion; as a consequence of the increase in maximum contraction force and calcium sensitivity of contraction force. These events altogether slow down myosin kinetics and prolong duty cycle resulting in accumulated myosins being cooperatively recruited to actin binding sites to sustain thin filament activation as a means to fine-tune myofilament calcium sensitivity to force. During cardiogenesis plays an early role in cardiac contractility by promoting cardiac myofibril assembly. The polypeptide is Myosin regulatory light chain 2, ventricular/cardiac muscle isoform (Mus musculus (Mouse)).